Here is a 256-residue protein sequence, read N- to C-terminus: Protein RGF1 INDUCIBLE TRANSCRIPTION FACTOR 1 (256 aa).

The B box-type zinc finger occupies 21–59 (CPYHETAKKNERNVCCLDCCTSLCPHCVPSHRFHRLLQV).

In terms of tissue distribution, expressed predominantly in root meristematic zones.

The protein localises to the nucleus. Its function is as follows. Probable transcription factor that plays a central role in mediating RGF1 hormone peptide signaling leading to the production of reactive oxygen species (ROS) in roots to modulate meristem size and root growth, probably via oxidative post-translational modification of the transcription factor PLETHORA (e.g. PLT1 and PLT2). In Arabidopsis thaliana (Mouse-ear cress), this protein is Protein RGF1 INDUCIBLE TRANSCRIPTION FACTOR 1.